A 525-amino-acid polypeptide reads, in one-letter code: Peptide chain release factor 3 (525 aa).

The 268-residue stretch at 9–276 folds into the tr-type G domain; it reads AKRRTFAIIS…GFTRYAPAPQ (268 aa). GTP contacts are provided by residues 18 to 25, 86 to 90, and 140 to 143; these read SHPDAGKT, DTPGH, and NKFD.

This sequence belongs to the TRAFAC class translation factor GTPase superfamily. Classic translation factor GTPase family. PrfC subfamily.

Its subcellular location is the cytoplasm. Increases the formation of ribosomal termination complexes and stimulates activities of RF-1 and RF-2. It binds guanine nucleotides and has strong preference for UGA stop codons. It may interact directly with the ribosome. The stimulation of RF-1 and RF-2 is significantly reduced by GTP and GDP, but not by GMP. The protein is Peptide chain release factor 3 of Francisella tularensis subsp. tularensis (strain FSC 198).